The following is a 229-amino-acid chain: Cytochrome c oxidase subunit 2 (229 aa).

Residues 1–26 (MANWTQLGLQDASSPLMEELIYFHDY) are Mitochondrial intermembrane-facing. Residues 27 to 48 (TLIILTLITILVFYGLASLIVS) traverse the membrane as a helical segment. Over 49–62 (SNTNRFFLEGQSLE) the chain is Mitochondrial matrix. The chain crosses the membrane as a helical span at residues 63–82 (TIWTVIPAVILIFIALPSLQ). Over 83–229 (LLYLIDEVNN…ENWVSNFLNE (147 aa)) the chain is Mitochondrial intermembrane. Cu cation contacts are provided by H161, C196, E198, C200, H204, and M207. E198 provides a ligand contact to Mg(2+).

The protein belongs to the cytochrome c oxidase subunit 2 family. Component of the cytochrome c oxidase (complex IV, CIV), a multisubunit enzyme composed of a catalytic core of 3 subunits and several supernumerary subunits. The complex exists as a monomer or a dimer and forms supercomplexes (SCs) in the inner mitochondrial membrane with ubiquinol-cytochrome c oxidoreductase (cytochrome b-c1 complex, complex III, CIII). The cofactor is Cu cation.

The protein resides in the mitochondrion inner membrane. It catalyses the reaction 4 Fe(II)-[cytochrome c] + O2 + 8 H(+)(in) = 4 Fe(III)-[cytochrome c] + 2 H2O + 4 H(+)(out). Component of the cytochrome c oxidase, the last enzyme in the mitochondrial electron transport chain which drives oxidative phosphorylation. The respiratory chain contains 3 multisubunit complexes succinate dehydrogenase (complex II, CII), ubiquinol-cytochrome c oxidoreductase (cytochrome b-c1 complex, complex III, CIII) and cytochrome c oxidase (complex IV, CIV), that cooperate to transfer electrons derived from NADH and succinate to molecular oxygen, creating an electrochemical gradient over the inner membrane that drives transmembrane transport and the ATP synthase. Cytochrome c oxidase is the component of the respiratory chain that catalyzes the reduction of oxygen to water. Electrons originating from reduced cytochrome c in the intermembrane space (IMS) are transferred via the dinuclear copper A center (CU(A)) of subunit 2 and heme A of subunit 1 to the active site in subunit 1, a binuclear center (BNC) formed by heme A3 and copper B (CU(B)). The BNC reduces molecular oxygen to 2 water molecules using 4 electrons from cytochrome c in the IMS and 4 protons from the mitochondrial matrix. This Pisaster ochraceus (Ochre sea star) protein is Cytochrome c oxidase subunit 2 (COII).